The chain runs to 285 residues: Shikimate dehydrogenase (NADP(+)) (285 aa).

Shikimate is bound by residues serine 19–serine 21 and threonine 66. Lysine 70 (proton acceptor) is an active-site residue. 2 residues coordinate shikimate: asparagine 91 and aspartate 107. NADP(+) is bound by residues glycine 129–alanine 133 and leucine 228. Shikimate is bound at residue tyrosine 230. Glycine 251 is a binding site for NADP(+).

Belongs to the shikimate dehydrogenase family. As to quaternary structure, homodimer.

It carries out the reaction shikimate + NADP(+) = 3-dehydroshikimate + NADPH + H(+). Its pathway is metabolic intermediate biosynthesis; chorismate biosynthesis; chorismate from D-erythrose 4-phosphate and phosphoenolpyruvate: step 4/7. Its function is as follows. Involved in the biosynthesis of the chorismate, which leads to the biosynthesis of aromatic amino acids. Catalyzes the reversible NADPH linked reduction of 3-dehydroshikimate (DHSA) to yield shikimate (SA). The protein is Shikimate dehydrogenase (NADP(+)) of Prochlorococcus marinus (strain MIT 9515).